A 784-amino-acid polypeptide reads, in one-letter code: ATP-dependent 6-phosphofructokinase, platelet type (784 aa).

An N-acetylmethionine modification is found at Met1. Positions 1 to 399 (MDADDSRAPK…NLNTYKRLAI (399 aa)) are N-terminal catalytic PFK domain 1. Residues Ser6, Ser12, and Ser21 each carry the phosphoserine modification. Residues Gly34, 97–98 (RC), and 127–130 (GDGS) each bind ATP. Asp128 contacts Mg(2+). Ser142 bears the Phosphoserine mark. Substrate is bound by residues 173–175 (SID), Arg210, 217–219 (MGR), Glu273, Arg301, and 307–310 (HVQR). The active-site Proton acceptor is the Asp175. Ser386 is subject to Phosphoserine. The residue at position 395 (Lys395) is an N6-acetyllysine. Residues 400-411 (KLPDDQIPKTNC) form an interdomain linker region. The C-terminal regulatory PFK domain 2 stretch occupies residues 412 to 784 (NVAVINVGAP…QLEHVQPWSV (373 aa)). Arg481 contributes to the beta-D-fructose 2,6-bisphosphate binding site. Lys486 is subject to N6-acetyllysine. Beta-D-fructose 2,6-bisphosphate is bound by residues 538–542 (TVSNN), Arg576, 583–585 (MGG), and Glu639. Residue Ser540 is glycosylated (O-linked (GlcNAc) serine). The residue at position 651 (Tyr651) is a Phosphotyrosine. Beta-D-fructose 2,6-bisphosphate is bound by residues Arg665 and 671–674 (HMQQ). N6-acetyllysine is present on Lys688. Residue Arg744 coordinates beta-D-fructose 2,6-bisphosphate. Ser783 carries the post-translational modification Phosphoserine.

It belongs to the phosphofructokinase type A (PFKA) family. ATP-dependent PFK group I subfamily. Eukaryotic two domain clade 'E' sub-subfamily. As to quaternary structure, homo- and heterotetramers. Phosphofructokinase (PFK) enzyme functions as a tetramer composed of different combinations of 3 types of subunits, called PFKM (M), PFKL (L) and PFKP (P). The composition of the PFK tetramer differs according to the tissue type it is present in. The kinetic and regulatory properties of the tetrameric enzyme are dependent on the subunit composition, hence can vary across tissues. Interacts with ATG4B; promoting phosphorylation of ATG4B. Mg(2+) is required as a cofactor. Post-translationally, glcNAcylation decreases enzyme activity. Phosphorylation at Ser-386 promotes interaction with ATG4B.

The protein localises to the cytoplasm. It catalyses the reaction beta-D-fructose 6-phosphate + ATP = beta-D-fructose 1,6-bisphosphate + ADP + H(+). The protein operates within carbohydrate degradation; glycolysis; D-glyceraldehyde 3-phosphate and glycerone phosphate from D-glucose: step 3/4. Allosterically activated by ADP, AMP, or fructose 2,6-bisphosphate, and allosterically inhibited by ATP or citrate. Functionally, catalyzes the phosphorylation of D-fructose 6-phosphate to fructose 1,6-bisphosphate by ATP, the first committing step of glycolysis. The polypeptide is ATP-dependent 6-phosphofructokinase, platelet type (PFKP) (Pongo abelii (Sumatran orangutan)).